The chain runs to 173 residues: Crossover junction endodeoxyribonuclease RuvC (173 aa).

Active-site residues include D8, E67, and D139. Residues D8, E67, and D139 each coordinate Mg(2+).

This sequence belongs to the RuvC family. Homodimer which binds Holliday junction (HJ) DNA. The HJ becomes 2-fold symmetrical on binding to RuvC with unstacked arms; it has a different conformation from HJ DNA in complex with RuvA. In the full resolvosome a probable DNA-RuvA(4)-RuvB(12)-RuvC(2) complex forms which resolves the HJ. Mg(2+) is required as a cofactor.

The protein resides in the cytoplasm. The catalysed reaction is Endonucleolytic cleavage at a junction such as a reciprocal single-stranded crossover between two homologous DNA duplexes (Holliday junction).. Functionally, the RuvA-RuvB-RuvC complex processes Holliday junction (HJ) DNA during genetic recombination and DNA repair. Endonuclease that resolves HJ intermediates. Cleaves cruciform DNA by making single-stranded nicks across the HJ at symmetrical positions within the homologous arms, yielding a 5'-phosphate and a 3'-hydroxyl group; requires a central core of homology in the junction. The consensus cleavage sequence is 5'-(A/T)TT(C/G)-3'. Cleavage occurs on the 3'-side of the TT dinucleotide at the point of strand exchange. HJ branch migration catalyzed by RuvA-RuvB allows RuvC to scan DNA until it finds its consensus sequence, where it cleaves and resolves the cruciform DNA. The protein is Crossover junction endodeoxyribonuclease RuvC of Shigella flexneri serotype 5b (strain 8401).